The sequence spans 121 residues: Large ribosomal subunit protein uL3 (121 aa).

N5-methylglutamine is present on Q62.

The protein belongs to the universal ribosomal protein uL3 family. In terms of assembly, part of the 50S ribosomal subunit. Forms a cluster with proteins L14 and L19. Post-translationally, methylated by PrmB.

One of the primary rRNA binding proteins, it binds directly near the 3'-end of the 23S rRNA, where it nucleates assembly of the 50S subunit. The chain is Large ribosomal subunit protein uL3 (rplC) from Aggregatibacter actinomycetemcomitans (Actinobacillus actinomycetemcomitans).